We begin with the raw amino-acid sequence, 90 residues long: Albumin (90 aa).

Serine 5 is subject to Phosphoserine. Ca(2+) contacts are provided by glutamate 6 and aspartate 13. Residues 25–90 (LLRHLVDEPQ…LVASTQAALA (66 aa)) enclose the Albumin domain. Serine 61 is modified (phosphoserine). Threonine 62 and threonine 64 each carry phosphothreonine. The residue at position 80 (lysine 80) is an N6-methyllysine.

Belongs to the ALB/AFP/VDB family. Interacts with FCGRT; this interaction regulates ALB homeostasis. Interacts with TASOR. In plasma, occurs in a covalently-linked complex with chromophore-bound alpha-1-microglobulin; this interaction does not prevent fatty acid binding to ALB. As to expression, plasma.

The protein resides in the secreted. Functionally, binds water, Ca(2+), Na(+), K(+), fatty acids, hormones, bilirubin and drugs. Its main function is the regulation of the colloidal osmotic pressure of blood. Major zinc transporter in plasma, typically binds about 80% of all plasma zinc. Major calcium and magnesium transporter in plasma, binds approximately 45% of circulating calcium and magnesium in plasma. Potentially has more than two calcium-binding sites and might additionally bind calcium in a non-specific manner. The shared binding site between zinc and calcium suggests a crosstalk between zinc and calcium transport in the blood. The rank order of affinity is zinc &gt; calcium &gt; magnesium. Binds to the bacterial siderophore enterobactin and inhibits enterobactin-mediated iron uptake of E.coli from ferric transferrin, and may thereby limit the utilization of iron and growth of enteric bacteria such as E.coli. Does not prevent iron uptake by the bacterial siderophore aerobactin. The polypeptide is Albumin (Capra hircus (Goat)).